The chain runs to 137 residues: Large ribosomal subunit protein uL16 (137 aa).

This sequence belongs to the universal ribosomal protein uL16 family. As to quaternary structure, part of the 50S ribosomal subunit.

In terms of biological role, binds 23S rRNA and is also seen to make contacts with the A and possibly P site tRNAs. This Francisella tularensis subsp. holarctica (strain FTNF002-00 / FTA) protein is Large ribosomal subunit protein uL16.